The chain runs to 303 residues: Polyisoprenyl-teichoic acid--peptidoglycan teichoic acid transferase TagU (303 aa).

The Cytoplasmic portion of the chain corresponds to 1–4; the sequence is MKKK. The chain crosses the membrane as a helical; Signal-anchor for type II membrane protein span at residues 5–25; sequence ILFWVLGILGVLIIGGGIYAY. At 26 to 303 the chain is on the extracellular side; it reads NVYSSVSNTL…KLRTHLEVTK (278 aa).

The protein belongs to the LytR/CpsA/Psr (LCP) family.

Its subcellular location is the cell membrane. The protein operates within cell wall biogenesis. Its function is as follows. May catalyze the final step in cell wall teichoic acid biosynthesis, the transfer of the anionic cell wall polymers (APs) from their lipid-linked precursor to the cell wall peptidoglycan (PG). This chain is Polyisoprenyl-teichoic acid--peptidoglycan teichoic acid transferase TagU, found in Bacillus anthracis (strain A0248).